A 129-amino-acid chain; its full sequence is MYEDAIDFDDPYLFHSVISPQLNSGLITPRYVLDKVIDKYNKSNTDLLYEVEGYIRQLVWREYSRMLYRYIRKDMMKNYFGNKNRISEIWYTGNTGIEPVDLAISSAFQYGLSTSNFFFIFLYIFTIKI.

Residues 103 to 125 form a helical membrane-spanning segment; sequence AISSAFQYGLSTSNFFFIFLYIF.

Its subcellular location is the membrane. This is an uncharacterized protein from Acanthamoeba polyphaga (Amoeba).